Here is a 273-residue protein sequence, read N- to C-terminus: Coiled-coil domain-containing protein 122 (273 aa).

Residues 1–17 (MSDNKERKSQGFPKEDN) are compositionally biased toward basic and acidic residues. A disordered region spans residues 1 to 39 (MSDNKERKSQGFPKEDNQDTSSLADAVEKVAKQQQSQAS). Coiled-coil stretches lie at residues 24-116 (ADAV…TAQE) and 179-269 (NRIT…RKCI).

In Homo sapiens (Human), this protein is Coiled-coil domain-containing protein 122 (CCDC122).